The chain runs to 661 residues: DNA ligase (661 aa).

Residues aspartate 31–aspartate 35, serine 80–leucine 81, and glutamate 109 contribute to the NAD(+) site. The active-site N6-AMP-lysine intermediate is lysine 111. NAD(+)-binding residues include arginine 132, glutamate 167, lysine 283, and lysine 307. Positions 401, 404, 419, and 424 each coordinate Zn(2+). The region spanning alanine 582 to serine 661 is the BRCT domain.

It belongs to the NAD-dependent DNA ligase family. LigA subfamily. Mg(2+) serves as cofactor. Mn(2+) is required as a cofactor.

The catalysed reaction is NAD(+) + (deoxyribonucleotide)n-3'-hydroxyl + 5'-phospho-(deoxyribonucleotide)m = (deoxyribonucleotide)n+m + AMP + beta-nicotinamide D-nucleotide.. DNA ligase that catalyzes the formation of phosphodiester linkages between 5'-phosphoryl and 3'-hydroxyl groups in double-stranded DNA using NAD as a coenzyme and as the energy source for the reaction. It is essential for DNA replication and repair of damaged DNA. The polypeptide is DNA ligase (Syntrophomonas wolfei subsp. wolfei (strain DSM 2245B / Goettingen)).